The sequence spans 330 residues: uncharacterized protein (330 aa).

Residue His257 is part of the active site.

It belongs to the IUNH family.

This is an uncharacterized protein from Schizosaccharomyces pombe (strain 972 / ATCC 24843) (Fission yeast).